The chain runs to 314 residues: ATP synthase gamma chain (314 aa).

The protein belongs to the ATPase gamma chain family. In terms of assembly, F-type ATPases have 2 components, CF(1) - the catalytic core - and CF(0) - the membrane proton channel. CF(1) has five subunits: alpha(3), beta(3), gamma(1), delta(1), epsilon(1). CF(0) has three main subunits: a, b and c.

It localises to the cell membrane. In terms of biological role, produces ATP from ADP in the presence of a proton gradient across the membrane. The gamma chain is believed to be important in regulating ATPase activity and the flow of protons through the CF(0) complex. The chain is ATP synthase gamma chain from Lactiplantibacillus plantarum (strain ATCC BAA-793 / NCIMB 8826 / WCFS1) (Lactobacillus plantarum).